Here is a 370-residue protein sequence, read N- to C-terminus: F-box protein At3g20690 (370 aa).

The F-box domain maps to 1 to 45; sequence MMMSDLPHDLVEEILSRLPLISLKAMRSTCKTWNVLSKHRSFANK.

The chain is F-box protein At3g20690 from Arabidopsis thaliana (Mouse-ear cress).